A 146-amino-acid chain; its full sequence is Aspartate carbamoyltransferase regulatory chain (146 aa).

Cys-102, Cys-107, Cys-131, and Cys-134 together coordinate Zn(2+).

This sequence belongs to the PyrI family. Contains catalytic and regulatory chains. Zn(2+) serves as cofactor.

In terms of biological role, involved in allosteric regulation of aspartate carbamoyltransferase. The polypeptide is Aspartate carbamoyltransferase regulatory chain (Clostridium botulinum (strain Okra / Type B1)).